We begin with the raw amino-acid sequence, 249 residues long: Probable transcriptional regulatory protein Minf_0651 (249 aa).

Belongs to the TACO1 family.

Its subcellular location is the cytoplasm. This chain is Probable transcriptional regulatory protein Minf_0651, found in Methylacidiphilum infernorum (isolate V4) (Methylokorus infernorum (strain V4)).